A 274-amino-acid chain; its full sequence is 2,3,4,5-tetrahydropyridine-2,6-dicarboxylate N-succinyltransferase (274 aa).

Residues Arg107 and Asp144 each contribute to the substrate site.

The protein belongs to the transferase hexapeptide repeat family. As to quaternary structure, homotrimer.

It localises to the cytoplasm. It catalyses the reaction (S)-2,3,4,5-tetrahydrodipicolinate + succinyl-CoA + H2O = (S)-2-succinylamino-6-oxoheptanedioate + CoA. It functions in the pathway amino-acid biosynthesis; L-lysine biosynthesis via DAP pathway; LL-2,6-diaminopimelate from (S)-tetrahydrodipicolinate (succinylase route): step 1/3. The polypeptide is 2,3,4,5-tetrahydropyridine-2,6-dicarboxylate N-succinyltransferase (Cereibacter sphaeroides (strain ATCC 17029 / ATH 2.4.9) (Rhodobacter sphaeroides)).